A 92-amino-acid polypeptide reads, in one-letter code: Small ribosomal subunit protein uS19c (92 aa).

It belongs to the universal ribosomal protein uS19 family.

It localises to the plastid. It is found in the chloroplast. Functionally, protein S19 forms a complex with S13 that binds strongly to the 16S ribosomal RNA. This chain is Small ribosomal subunit protein uS19c, found in Cycas taitungensis (Prince sago).